The chain runs to 464 residues: V-type ATP synthase beta chain (464 aa).

This sequence belongs to the ATPase alpha/beta chains family.

Its function is as follows. Produces ATP from ADP in the presence of a proton gradient across the membrane. The V-type beta chain is a regulatory subunit. This chain is V-type ATP synthase beta chain, found in Streptococcus sanguinis (strain SK36).